Consider the following 83-residue polypeptide: Short neurotoxin D (83 aa).

Residues 1 to 21 (MKTLLLTLVVVTMVCLDLGYT) form the signal peptide. Intrachain disulfides connect C24-C45, C38-C62, C64-C75, and C76-C81.

This sequence belongs to the three-finger toxin family. Short-chain subfamily. Type I alpha-neurotoxin sub-subfamily. Expressed by the venom gland.

The protein localises to the secreted. In terms of biological role, binds to muscle nicotinic acetylcholine receptor (nAChR) and inhibit acetylcholine from binding to the receptor, thereby impairing neuromuscular transmission. The sequence is that of Short neurotoxin D from Laticauda colubrina (Yellow-lipped sea krait).